We begin with the raw amino-acid sequence, 424 residues long: 3-oxo-tetronate kinase (424 aa).

ATP-binding positions include S260, 364–367 (GGET), and G407.

This sequence belongs to the four-carbon acid sugar kinase family.

The catalysed reaction is 3-dehydro-L-erythronate + ATP = 3-dehydro-4-O-phospho-L-erythronate + ADP + H(+). It catalyses the reaction 3-dehydro-D-erythronate + ATP = 3-dehydro-4-O-phospho-D-erythronate + ADP + H(+). Catalyzes the ATP-dependent phosphorylation of 3-oxo-tetronate to 3-oxo-tetronate 4-phosphate. The polypeptide is 3-oxo-tetronate kinase (Pectobacterium atrosepticum (strain SCRI 1043 / ATCC BAA-672) (Erwinia carotovora subsp. atroseptica)).